Here is a 159-residue protein sequence, read N- to C-terminus: Ribosomal RNA large subunit methyltransferase H (159 aa).

S-adenosyl-L-methionine contacts are provided by residues Leu76, Gly108, and Phe127–Phe132.

Belongs to the RNA methyltransferase RlmH family. As to quaternary structure, homodimer.

The protein localises to the cytoplasm. The catalysed reaction is pseudouridine(1915) in 23S rRNA + S-adenosyl-L-methionine = N(3)-methylpseudouridine(1915) in 23S rRNA + S-adenosyl-L-homocysteine + H(+). In terms of biological role, specifically methylates the pseudouridine at position 1915 (m3Psi1915) in 23S rRNA. In Geobacillus sp. (strain WCH70), this protein is Ribosomal RNA large subunit methyltransferase H.